We begin with the raw amino-acid sequence, 136 residues long: Large ribosomal subunit protein bL21 (136 aa).

It belongs to the bacterial ribosomal protein bL21 family. In terms of assembly, part of the 50S ribosomal subunit. Contacts protein L20.

Its function is as follows. This protein binds to 23S rRNA in the presence of protein L20. This chain is Large ribosomal subunit protein bL21, found in Trichodesmium erythraeum (strain IMS101).